A 101-amino-acid chain; its full sequence is NAD(P)H-quinone oxidoreductase subunit 4L, chloroplastic (101 aa).

The next 3 membrane-spanning stretches (helical) occupy residues 2–22 (MLEH…YGLI), 32–52 (MCLE…SDFF), and 61–81 (IFSI…PAIV).

Belongs to the complex I subunit 4L family. NDH is composed of at least 16 different subunits, 5 of which are encoded in the nucleus.

It is found in the plastid. It localises to the chloroplast thylakoid membrane. It carries out the reaction a plastoquinone + NADH + (n+1) H(+)(in) = a plastoquinol + NAD(+) + n H(+)(out). It catalyses the reaction a plastoquinone + NADPH + (n+1) H(+)(in) = a plastoquinol + NADP(+) + n H(+)(out). Its function is as follows. NDH shuttles electrons from NAD(P)H:plastoquinone, via FMN and iron-sulfur (Fe-S) centers, to quinones in the photosynthetic chain and possibly in a chloroplast respiratory chain. The immediate electron acceptor for the enzyme in this species is believed to be plastoquinone. Couples the redox reaction to proton translocation, and thus conserves the redox energy in a proton gradient. The protein is NAD(P)H-quinone oxidoreductase subunit 4L, chloroplastic of Vitis vinifera (Grape).